We begin with the raw amino-acid sequence, 879 residues long: Prostaglandin F2 receptor negative regulator (879 aa).

The N-terminal stretch at 1-21 (MGRPAPRPLLLALLSLAVCRG) is a signal peptide. 2 consecutive Ig-like C2-type domains span residues 22–129 (RVVR…ATVQ) and 149–268 (PSSR…KAVE). Topologically, residues 22–832 (RVVRVPAGTL…MDVLNAFKYP (811 aa)) are extracellular. Intrachain disulfides connect C43–C119 and C169–C247. N-linked (GlcNAc...) asparagine glycosylation occurs at N44. The Cell attachment site signature appears at 89–91 (RGD). T271 is modified (phosphothreonine). Ig-like C2-type domains lie at 276-389 (PTAL…WHKV), 406-527 (PEYQ…RNSS), 544-662 (ASED…AWSP), and 688-813 (PIFN…AEIH). Residues C299 and C373 are joined by a disulfide bond. Residues N300, N383, and N413 are each glycosylated (N-linked (GlcNAc...) asparagine). The Endoplasmic reticulum retention signal motif lies at 424 to 427 (PTEL). An intrachain disulfide couples C429 to C515. 4 N-linked (GlcNAc...) asparagine glycosylation sites follow: N525, N600, N618, and N691. An intrachain disulfide couples C571 to C655. The Cell attachment site motif lies at 703-705 (RGD). A disulfide bridge links C711 with C793. A helical transmembrane segment spans residues 833 to 853 (LLIGVGLSTVIGLLSCLIGYC). Topologically, residues 854–879 (SSHWCCKKEVRETRRERRRLMSMEMD) are cytoplasmic.

As to quaternary structure, interacts with CD9 and CD81. Part of a complex composed of CD9, CD81 and IGSF8. Also seems to interact with CD63, CD82 and CD151. As to expression, reproductive tissues, lung and heart.

Its subcellular location is the endoplasmic reticulum membrane. The protein localises to the golgi apparatus. It is found in the trans-Golgi network membrane. In terms of biological role, inhibits the binding of prostaglandin F2-alpha (PGF2-alpha) to its specific FP receptor, by decreasing the receptor number rather than the affinity constant. Functional coupling with the prostaglandin F2-alpha receptor seems to occur. In myoblasts, associates with tetraspanins CD9 and CD81 to prevent myotube fusion during muscle regeneration. The protein is Prostaglandin F2 receptor negative regulator (Ptgfrn) of Rattus norvegicus (Rat).